Here is a 171-residue protein sequence, read N- to C-terminus: S-ribosylhomocysteine lyase (171 aa).

Residues His54, His58, and Cys128 each contribute to the Fe cation site.

This sequence belongs to the LuxS family. As to quaternary structure, homodimer. Requires Fe cation as cofactor.

The catalysed reaction is S-(5-deoxy-D-ribos-5-yl)-L-homocysteine = (S)-4,5-dihydroxypentane-2,3-dione + L-homocysteine. In terms of biological role, involved in the synthesis of autoinducer 2 (AI-2) which is secreted by bacteria and is used to communicate both the cell density and the metabolic potential of the environment. The regulation of gene expression in response to changes in cell density is called quorum sensing. Catalyzes the transformation of S-ribosylhomocysteine (RHC) to homocysteine (HC) and 4,5-dihydroxy-2,3-pentadione (DPD). The chain is S-ribosylhomocysteine lyase from Aliarcobacter butzleri (strain RM4018) (Arcobacter butzleri).